The following is a 353-amino-acid chain: Ferredoxin--NADP reductase 1 (353 aa).

The FAD site is built by aspartate 43, glutamine 51, tyrosine 56, alanine 96, phenylalanine 135, aspartate 300, and serine 341.

It belongs to the ferredoxin--NADP reductase type 2 family. In terms of assembly, homodimer. Requires FAD as cofactor.

It catalyses the reaction 2 reduced [2Fe-2S]-[ferredoxin] + NADP(+) + H(+) = 2 oxidized [2Fe-2S]-[ferredoxin] + NADPH. The protein is Ferredoxin--NADP reductase 1 of Cupriavidus metallidurans (strain ATCC 43123 / DSM 2839 / NBRC 102507 / CH34) (Ralstonia metallidurans).